The following is a 39-amino-acid chain: Large ribosomal subunit protein bL36 (39 aa).

The protein belongs to the bacterial ribosomal protein bL36 family.

The chain is Large ribosomal subunit protein bL36 from Pediococcus pentosaceus (strain ATCC 25745 / CCUG 21536 / LMG 10740 / 183-1w).